Reading from the N-terminus, the 279-residue chain is Isopentenyl-diphosphate delta-isomerase idi1 (279 aa).

Lys-78 provides a ligand contact to substrate. Mg(2+)-binding residues include His-82 and His-93. One can recognise a Nudix hydrolase domain in the interval 91–249 (LLHRAFSVFL…GLKFTPWFKL (159 aa)). Substrate is bound by residues Gln-111 and Lys-116. The active site involves Cys-128. Ser-129 is a binding site for substrate. The short motif at 129–162 (SHPLGIPGETGAELDAAVLGVKRAAQRKLDQELG) is the Nudix box element. 2 residues coordinate Mg(2+): Glu-191 and Glu-193. Glu-193 is an active-site residue.

It belongs to the IPP isomerase type 1 family. Mg(2+) is required as a cofactor.

The catalysed reaction is isopentenyl diphosphate = dimethylallyl diphosphate. It functions in the pathway isoprenoid biosynthesis; dimethylallyl diphosphate biosynthesis; dimethylallyl diphosphate from isopentenyl diphosphate: step 1/1. Its function is as follows. Isopentenyl-diphosphate delta-isomerase; part of the second module of ergosterol biosynthesis pathway that includes the middle steps of the pathway. Idi1 catalyzes the 1,3-allylic rearrangement of isopentenyl (IPP) to its highly electrophilic allylic isomer, dimethylallyl diphosphate (DMAPP). The second module is carried out in the vacuole and involves the formation of farnesyl diphosphate, which is also an important intermediate in the biosynthesis of ubiquinone, dolichol, heme and prenylated proteins. Activity by the mevalonate kinase erg12 (AFUA_4G07780) first converts mevalonate into 5-phosphomevalonate. 5-phosphomevalonate is then further converted to 5-diphosphomevalonate by the phosphomevalonate kinase erg8 (AFUA_5G10680). The diphosphomevalonate decarboxylase mvd1 (AFUA_4G07130) then produces isopentenyl diphosphate. The isopentenyl-diphosphate delta-isomerase idi1 (AFUA_6G11160) then catalyzes the 1,3-allylic rearrangement of the homoallylic substrate isopentenyl (IPP) to its highly electrophilic allylic isomer, dimethylallyl diphosphate (DMAPP). Finally the farnesyl diphosphate synthase erg20 (AFUA_5G02450) catalyzes the sequential condensation of isopentenyl pyrophosphate with dimethylallyl pyrophosphate, and then with the resultant geranylpyrophosphate to the ultimate product farnesyl pyrophosphate. This is Isopentenyl-diphosphate delta-isomerase idi1 from Aspergillus fumigatus (strain ATCC MYA-4609 / CBS 101355 / FGSC A1100 / Af293) (Neosartorya fumigata).